Here is a 152-residue protein sequence, read N- to C-terminus: Transcriptional regulator MraZ (152 aa).

SpoVT-AbrB domains lie at 5–52 (ANAI…PLPE) and 81–124 (ATEG…DHSV).

It belongs to the MraZ family. As to quaternary structure, forms oligomers.

It localises to the cytoplasm. Its subcellular location is the nucleoid. This is Transcriptional regulator MraZ from Pseudoalteromonas atlantica (strain T6c / ATCC BAA-1087).